The chain runs to 822 residues: Probable phosphoketolase (822 aa).

This sequence belongs to the XFP family. The cofactor is thiamine diphosphate.

This is Probable phosphoketolase from Lactococcus lactis subsp. lactis (strain IL1403) (Streptococcus lactis).